We begin with the raw amino-acid sequence, 773 residues long: Kelch domain-containing protein 7A (773 aa).

Residues 23–40 (VVLSAAALLLVTAAYKLY) traverse the membrane as a helical segment. Asparagine 61 is a glycosylation site (N-linked (GlcNAc...) asparagine). Disordered regions lie at residues 64–99 (EALG…LDYS) and 114–207 (SEEA…APNG). Phosphoserine is present on serine 89. Over residues 114–126 (SEEATRKGSDESQ) the composition is skewed to basic and acidic residues. The N-linked (GlcNAc...) asparagine glycan is linked to asparagine 256. The interval 296 to 355 (KADSRPVPCPAALADAPSPGPGPEPLVTGAASRDEAANTAGGGASEAASPQPVASPSAPG) is disordered. 5 Kelch repeats span residues 323 to 370 (TGAA…ENPE), 488 to 534 (KRLV…LCTL), 537 to 585 (YLFV…ALEG), 586 to 628 (HLYA…ATVC), and 631 to 673 (EIFV…AVNG). Positions 340–354 (SEAASPQPVASPSAP) are enriched in low complexity. At serine 361 the chain carries Phosphoserine.

The protein localises to the membrane. This Mus musculus (Mouse) protein is Kelch domain-containing protein 7A (Klhdc7a).